Consider the following 481-residue polypeptide: NADH-quinone oxidoreductase subunit N (481 aa).

A run of 13 helical transmembrane segments spans residues 14–34 (LILSVGALLLLLVAAFGGDGF), 38–57 (IGWGAVALFAAAGFSLTGPA), 76–96 (FAKLLIYIAAAVSVAVAPGFF), 108–128 (PVLILLSGVGMGMMVSAGDLL), 162–182 (FVLGALASGILLYGISLLYGF), 204–224 (MFGMVFVFAGLAFKISAVPFH), 235–255 (PTPVTAFFASAPKVAGMALLL), 272–292 (IVVFAALASTILGAVAAIGQT), 297–317 (LLAYSSINNVGFALFGLAAGS), 323–343 (ATMTYMAVYVAMTLGSFICVL), 369–389 (LAAAFAIFMFSLAGIPPLFGF), 403–423 (GFWPLAMVGIATSVIGAFYYL), and 449–469 (GLITLAALAVSPLGYLAIPLL).

This sequence belongs to the complex I subunit 2 family. As to quaternary structure, NDH-1 is composed of 14 different subunits. Subunits NuoA, H, J, K, L, M, N constitute the membrane sector of the complex.

It is found in the cell inner membrane. It carries out the reaction a quinone + NADH + 5 H(+)(in) = a quinol + NAD(+) + 4 H(+)(out). Its function is as follows. NDH-1 shuttles electrons from NADH, via FMN and iron-sulfur (Fe-S) centers, to quinones in the respiratory chain. The immediate electron acceptor for the enzyme in this species is believed to be ubiquinone. Couples the redox reaction to proton translocation (for every two electrons transferred, four hydrogen ions are translocated across the cytoplasmic membrane), and thus conserves the redox energy in a proton gradient. The chain is NADH-quinone oxidoreductase subunit N from Rhizorhabdus wittichii (strain DSM 6014 / CCUG 31198 / JCM 15750 / NBRC 105917 / EY 4224 / RW1) (Sphingomonas wittichii).